A 138-amino-acid chain; its full sequence is Cysteine desulfuration protein SufE (138 aa).

The active-site Cysteine persulfide intermediate is the cysteine 51.

It belongs to the SufE family. In terms of assembly, homodimer. Interacts with SufS.

It is found in the cytoplasm. Its pathway is cofactor biosynthesis; iron-sulfur cluster biosynthesis. Participates in cysteine desulfuration mediated by SufS. Cysteine desulfuration mobilizes sulfur from L-cysteine to yield L-alanine and constitutes an essential step in sulfur metabolism for biosynthesis of a variety of sulfur-containing biomolecules. Functions as a sulfur acceptor for SufS, by mediating the direct transfer of the sulfur atom from the S-sulfanylcysteine of SufS, an intermediate product of cysteine desulfuration process. This is Cysteine desulfuration protein SufE from Escherichia coli (strain K12 / MC4100 / BW2952).